We begin with the raw amino-acid sequence, 554 residues long: Glutamine--tRNA ligase (554 aa).

Residues 34-44 (PEPNGYLHIGH) carry the 'HIGH' region motif. ATP is bound by residues 35–37 (EPN) and 41–47 (HIGHAKS). Positions 67 and 212 each coordinate L-glutamine. ATP is bound by residues Thr-231, 261–262 (RL), and 269–271 (MSK). Residues 268 to 272 (VMSKR) carry the 'KMSKS' region motif. The interval 317-324 (TKQDNTIE) is interaction with tRNA.

It belongs to the class-I aminoacyl-tRNA synthetase family. In terms of assembly, monomer.

The protein localises to the cytoplasm. It carries out the reaction tRNA(Gln) + L-glutamine + ATP = L-glutaminyl-tRNA(Gln) + AMP + diphosphate. The sequence is that of Glutamine--tRNA ligase from Escherichia coli O127:H6 (strain E2348/69 / EPEC).